The chain runs to 337 residues: Protein hairy (337 aa).

An interaction with Topors region spans residues 29-48 (KSDRRSNKPIMEKRRRARIN). The 58-residue stretch at 31–88 (DRRSNKPIMEKRRRARINNCLNELKTLILDATKKDPARHSKLEKADILEKTVKHLQEL) folds into the bHLH domain. An Orange domain is found at 107 to 136 (FKAGFADCVNEVSRFPGIEPAQRRRLLQHL). 2 disordered regions span residues 146–178 (ELHQ…SQQG) and 259–311 (MPQR…VIQR). Positions 263–301 (TASTGSASSHSSAGYESAPGSSSSCSYAPPSPANSSYEP) are enriched in low complexity. Positions 334–337 (WRPW) match the WRPW motif motif.

As to quaternary structure, transcription repression requires formation of a complex with a corepressor protein (Groucho). Interacts with gro (via WPRW motif) and Topors. Post-translationally, ubiquitinated by Topors.

It localises to the nucleus. Its function is as follows. Pair-rule protein that regulates embryonic segmentation and adult bristle patterning. Transcriptional repressor of genes that require a bHLH protein for their transcription (e.g. ftz). The protein is Protein hairy of Drosophila melanogaster (Fruit fly).